Consider the following 462-residue polypeptide: Cytochrome P450 20A1 (462 aa).

Residues 4–24 form a helical membrane-spanning segment; it reads FAIFAVTFLLALVGAVLYLYP. Position 409 (cysteine 409) interacts with heme.

The protein belongs to the cytochrome P450 family. Heme is required as a cofactor.

Its subcellular location is the membrane. The sequence is that of Cytochrome P450 20A1 (CYP20A1) from Bos taurus (Bovine).